Consider the following 258-residue polypeptide: C4b-binding protein beta chain (258 aa).

Positions 1–15 (MLCLVVCCLIWLISA) are cleaved as a signal peptide. In terms of domain architecture, Sushi 1; atypical; lacks a Cys spans 18–75 (GSCSEPPPVNNSVFVGKETEEQILGIYLCIKGYHLVGKKSLVFDPSKEWNSTLPECLL). N-linked (GlcNAc...) asparagine glycans are attached at residues Asn27, Asn67, Asn89, Asn95, and Asn114. 5 disulfide bridges follow: Cys46–Cys73, Cys78–Cys118, Cys104–Cys131, Cys136–Cys176, and Cys162–Cys188. 2 consecutive Sushi domains span residues 76–133 (GHCP…ICRS) and 134–190 (RDCE…TCES). Asn218 carries an N-linked (GlcNAc...) asparagine glycan.

As to quaternary structure, disulfide-linked complex of alpha and beta chains.

It is found in the secreted. Functionally, controls the classical pathway of complement activation. It binds as a cofactor to C3b/C4b inactivator (C3bINA), which then hydrolyzes the complement fragment C4b. It also accelerates the degradation of the C4bC2a complex (C3 convertase) by dissociating the complement fragment C2a. It also interacts with anticoagulant protein S and with serum amyloid P component. The chain is C4b-binding protein beta chain (C4bpb) from Rattus norvegicus (Rat).